Consider the following 569-residue polypeptide: MIKDFNPGDFIGKKPTKIYAFGGIQEVGKNMYGIEYDDEIIIIDCGIKFASDDLLGINGIIPSFEHLIENQSKVKALFITHGHEDHIGGVPYLLKQVDIPVIYAPRIAASLILKKVNEHKDAKLNKIVTFDDFSEFQTKHFKIDFYRVNHSIPDAFGICVQTPNGNIVQSGDYRFDFAAGSEMLDVHKVVKIAERNVHVFMSESTNAEVPGFSQSEKLIYRNIQKILKEARGRVILTTFASNITRINEIIEIALNNKRKICLLGKSMDVNVNISRKIGLMAIDSNDIVEVRDIKNYPDRNILILCTGSQGEEAAALNTMARGKHNWVSLKSTDTIIMSSNPIPGNYAAVENLLNELSKFGVAIYENSSQLKLHASGHATQQELQLMLNLMFPKYLIPIHGEFKMMRTIKNIANECGIKSEDVALLSNGQVMYLIDEELYYSNEIINADPIYIESHNSSPDLARIIKQRQILSRDGMFAVIVVFDKNNNIIGIPTLITRGCFFALDSNPLMTKIAHSVKRTLESVIQSKKFNSHEQLTKELKRVCKETVSYFIWKNKNRNPLISTVLSWI.

Histidine 81, histidine 83, aspartate 85, histidine 86, histidine 150, and aspartate 172 together coordinate Zn(2+). Residue 373 to 377 participates in substrate binding; that stretch reads HASGH. Histidine 399 is a binding site for Zn(2+).

It belongs to the metallo-beta-lactamase superfamily. RNA-metabolizing metallo-beta-lactamase-like family. Bacterial RNase J subfamily. As to quaternary structure, homodimer, may be a subunit of the RNA degradosome. Zn(2+) is required as a cofactor.

It localises to the cytoplasm. An RNase that has 5'-3' exonuclease and possibly endoonuclease activity. Involved in maturation of rRNA and in some organisms also mRNA maturation and/or decay. This Mycoplasma genitalium (strain ATCC 33530 / DSM 19775 / NCTC 10195 / G37) (Mycoplasmoides genitalium) protein is Ribonuclease J.